The sequence spans 398 residues: Phosphoglycerate kinase (398 aa).

Residues aspartate 23–asparagine 25, arginine 38, histidine 61–lysine 64, arginine 122, and arginine 155 contribute to the substrate site. ATP contacts are provided by residues lysine 206, glycine 297, glutamate 328, and glycine 354 to serine 357.

Belongs to the phosphoglycerate kinase family. In terms of assembly, monomer.

The protein localises to the cytoplasm. The enzyme catalyses (2R)-3-phosphoglycerate + ATP = (2R)-3-phospho-glyceroyl phosphate + ADP. It participates in carbohydrate degradation; glycolysis; pyruvate from D-glyceraldehyde 3-phosphate: step 2/5. The sequence is that of Phosphoglycerate kinase from Clostridium botulinum (strain 657 / Type Ba4).